The sequence spans 142 residues: Glia maturation factor gamma (142 aa).

Ser-2 carries the post-translational modification N-acetylserine. The 136-residue stretch at Ser-4–Ala-139 folds into the ADF-H domain.

Belongs to the actin-binding proteins ADF family. GMF subfamily.

In Mus musculus (Mouse), this protein is Glia maturation factor gamma (Gmfg).